Consider the following 501-residue polypeptide: Spore development regulator VOSA (501 aa).

Disordered regions lie at residues 26-55 (GQFGDPNLTPPQAETQMSAQASAQAVGQEP), 67-88 (PQRARVAQGKEKGTDRKPIDPP), and 228-274 (AMTT…DTRG). The span at 35–50 (PPQAETQMSAQASAQA) shows a compositional bias: polar residues. A Velvet domain is found at 52-223 (GQEPEPDYKL…SDQGVRLRVR (172 aa)). 2 stretches are compositionally biased toward basic and acidic residues: residues 67–85 (PQRARVAQGKEKGTDRKPI) and 237–252 (QHAEVAKKHSEWDRKQ). A compositionally biased stretch (polar residues) spans 253-271 (TSAVSRHSSINENDSTPTD). Residues 364-371 (MSSHHGYT) carry the Nuclear localization signal motif. Disordered regions lie at residues 378-455 (FAPH…QQTP) and 474-501 (PGQLVGTSAPSPHLGQGYRHGMINEPGA).

Belongs to the velvet family. VosA subfamily. Forms a heterodimeric complex with VELB; the formation of the VELB-VOSA complex is light-dependent.

It localises to the nucleus. Its function is as follows. Component of the VELB-VOSA heterodimeric complex that plays a dual role in activating genes associated with spore maturation and repressing certain development-associated genes. The complex binds DNA through the DNA-binding domain of VOSA that recognizes an 11-nucleotide consensus sequence 5'-CTGGCCGCGGC-3' consisting of two motifs in the promoters of key developmental regulatory genes. Appears dispensable for the development and pathogenicity. In Pyricularia oryzae (strain 70-15 / ATCC MYA-4617 / FGSC 8958) (Rice blast fungus), this protein is Spore development regulator VOSA.